A 391-amino-acid chain; its full sequence is Pectin acetylesterase 7 (391 aa).

An N-terminal signal peptide occupies residues 1 to 23 (MGRLKQCWSSLLVLAVLVIGTGA). Active-site charge relay system residues include serine 171, aspartate 267, and histidine 334.

The protein belongs to the pectinacetylesterase family.

It localises to the secreted. Its subcellular location is the cell wall. Functionally, hydrolyzes acetyl esters in homogalacturonan regions of pectin. In type I primary cell wall, galacturonic acid residues of pectin can be acetylated at the O-2 and O-3 positions. Decreasing the degree of acetylation of pectin gels in vitro alters their physical properties. The protein is Pectin acetylesterase 7 of Arabidopsis thaliana (Mouse-ear cress).